The sequence spans 240 residues: 1-acyl-sn-glycerol-3-phosphate acyltransferase (240 aa).

The HXXXXD motif motif lies at 73-78 (HQNNYD).

The protein belongs to the 1-acyl-sn-glycerol-3-phosphate acyltransferase family.

Its subcellular location is the cell inner membrane. The enzyme catalyses a 1-acyl-sn-glycero-3-phosphate + an acyl-CoA = a 1,2-diacyl-sn-glycero-3-phosphate + CoA. Its pathway is phospholipid metabolism; CDP-diacylglycerol biosynthesis; CDP-diacylglycerol from sn-glycerol 3-phosphate: step 2/3. Functionally, converts lysophosphatidic acid (LPA) into phosphatidic acid by incorporating acyl moiety at the 2 position. The polypeptide is 1-acyl-sn-glycerol-3-phosphate acyltransferase (plsC) (Haemophilus influenzae (strain ATCC 51907 / DSM 11121 / KW20 / Rd)).